Reading from the N-terminus, the 599-residue chain is Elongation factor 4 (599 aa).

One can recognise a tr-type G domain in the interval 5-187 (DLIRNFSIVA…AIVTRLPPPK (183 aa)). Residues 17–22 (DHGKST) and 134–137 (NKID) contribute to the GTP site.

This sequence belongs to the TRAFAC class translation factor GTPase superfamily. Classic translation factor GTPase family. LepA subfamily.

It is found in the cell inner membrane. The catalysed reaction is GTP + H2O = GDP + phosphate + H(+). Its function is as follows. Required for accurate and efficient protein synthesis under certain stress conditions. May act as a fidelity factor of the translation reaction, by catalyzing a one-codon backward translocation of tRNAs on improperly translocated ribosomes. Back-translocation proceeds from a post-translocation (POST) complex to a pre-translocation (PRE) complex, thus giving elongation factor G a second chance to translocate the tRNAs correctly. Binds to ribosomes in a GTP-dependent manner. This is Elongation factor 4 from Cereibacter sphaeroides (strain ATCC 17025 / ATH 2.4.3) (Rhodobacter sphaeroides).